Reading from the N-terminus, the 993-residue chain is NACHT, LRR and PYD domains-containing protein 14 (993 aa).

The NACHT domain maps to 81 to 403; it reads QTVVLQGAAG…FYLLRENLEE (323 aa). 87-94 lines the ATP pocket; that stretch reads GAAGIGKT. 9 LRR repeats span residues 636-657, 660-680, 688-708, 717-738, 745-765, 774-795, 802-822, 831-852, and 859-879; these read DLKETDLGVNGLKTLCEALKCK, KLRVLRLASCDLNVARCQKLS, SLVFLNLSLNNLSNDGVKSLC, SLERLALASCGLTKAGCKVLSS, RLTHLCLSDNVLEDEGIKLLS, TLQSLVLRSCSFTPIGSEHLST, SLVHLDLGQNKLADNGVKLLC, NLQELELMSCVLTSKACGDLAS, and NLWSLDLGHNILDDAGLNILC.

The protein belongs to the NLRP family. Detected in adult ovary and testis. Detected in oocytes and in germ cell elements in seminiferous tubules in adult testis (at protein level).

It localises to the cytoplasm. May be involved in inflammation and spermatogenesis. The polypeptide is NACHT, LRR and PYD domains-containing protein 14 (Nlrp14) (Mus musculus (Mouse)).